The chain runs to 339 residues: Anthranilate phosphoribosyltransferase (339 aa).

5-phospho-alpha-D-ribose 1-diphosphate-binding positions include G79, G82–D83, S87, N89–T92, K107–S115, and A119. G79 is an anthranilate binding site. Position 91 (S91) interacts with Mg(2+). N110 serves as a coordination point for anthranilate. Residue R165 coordinates anthranilate. Mg(2+)-binding residues include D224 and E225.

It belongs to the anthranilate phosphoribosyltransferase family. In terms of assembly, homodimer. Mg(2+) is required as a cofactor.

The enzyme catalyses N-(5-phospho-beta-D-ribosyl)anthranilate + diphosphate = 5-phospho-alpha-D-ribose 1-diphosphate + anthranilate. The protein operates within amino-acid biosynthesis; L-tryptophan biosynthesis; L-tryptophan from chorismate: step 2/5. Functionally, catalyzes the transfer of the phosphoribosyl group of 5-phosphorylribose-1-pyrophosphate (PRPP) to anthranilate to yield N-(5'-phosphoribosyl)-anthranilate (PRA). The chain is Anthranilate phosphoribosyltransferase from Lactiplantibacillus plantarum (strain ATCC BAA-793 / NCIMB 8826 / WCFS1) (Lactobacillus plantarum).